A 121-amino-acid polypeptide reads, in one-letter code: Large ribosomal subunit protein eL8 (121 aa).

This sequence belongs to the eukaryotic ribosomal protein eL8 family. In terms of assembly, part of the 50S ribosomal subunit. Probably part of the RNase P complex.

It is found in the cytoplasm. Multifunctional RNA-binding protein that recognizes the K-turn motif in ribosomal RNA, the RNA component of RNase P, box H/ACA, box C/D and box C'/D' sRNAs. In Thermoplasma acidophilum (strain ATCC 25905 / DSM 1728 / JCM 9062 / NBRC 15155 / AMRC-C165), this protein is Large ribosomal subunit protein eL8.